The following is a 62-amino-acid chain: Small ribosomal subunit protein eS31 (62 aa).

Residues C29, C32, C48, and C51 each coordinate Zn(2+). The C4-type zinc-finger motif lies at 29–51; it reads CPRCGSFMAFHKWPVPRWHCGKC.

It belongs to the eukaryotic ribosomal protein eS31 family. Part of the 30S ribosomal subunit. It depends on Zn(2+) as a cofactor.

The chain is Small ribosomal subunit protein eS31 from Hyperthermus butylicus (strain DSM 5456 / JCM 9403 / PLM1-5).